We begin with the raw amino-acid sequence, 456 residues long: 3-isopropylmalate dehydratase large subunit (456 aa).

Positions 336, 396, and 399 each coordinate [4Fe-4S] cluster.

Belongs to the aconitase/IPM isomerase family. LeuC type 1 subfamily. Heterodimer of LeuC and LeuD. [4Fe-4S] cluster is required as a cofactor.

It carries out the reaction (2R,3S)-3-isopropylmalate = (2S)-2-isopropylmalate. Its pathway is amino-acid biosynthesis; L-leucine biosynthesis; L-leucine from 3-methyl-2-oxobutanoate: step 2/4. Catalyzes the isomerization between 2-isopropylmalate and 3-isopropylmalate, via the formation of 2-isopropylmaleate. The chain is 3-isopropylmalate dehydratase large subunit from Staphylococcus epidermidis (strain ATCC 12228 / FDA PCI 1200).